Reading from the N-terminus, the 129-residue chain is Small ribosomal subunit protein uS11 (129 aa).

This sequence belongs to the universal ribosomal protein uS11 family. As to quaternary structure, part of the 30S ribosomal subunit. Interacts with proteins S7 and S18. Binds to IF-3.

In terms of biological role, located on the platform of the 30S subunit, it bridges several disparate RNA helices of the 16S rRNA. Forms part of the Shine-Dalgarno cleft in the 70S ribosome. This chain is Small ribosomal subunit protein uS11, found in Haemophilus influenzae (strain ATCC 51907 / DSM 11121 / KW20 / Rd).